The sequence spans 1058 residues: Carbamoyl phosphate synthase large chain (1058 aa).

The interval 1–401 is carboxyphosphate synthetic domain; the sequence is MAKRTDIKKI…CLLKACRSLE (401 aa). Arginine 129, arginine 169, glycine 175, glycine 176, arginine 208, isoleucine 210, glutamate 215, glycine 241, isoleucine 242, histidine 243, glutamine 284, and glutamate 298 together coordinate ATP. The ATP-grasp 1 domain maps to 133–327; that stretch reads KQLMKELGEP…IAKIAAKIAV (195 aa). 3 residues coordinate Mg(2+): glutamine 284, glutamate 298, and asparagine 300. 3 residues coordinate Mn(2+): glutamine 284, glutamate 298, and asparagine 300. The segment at 402–546 is oligomerization domain; sequence IGVDHNELKG…YSTYEWENES (145 aa). The interval 547–929 is carbamoyl phosphate synthetic domain; the sequence is IKSEKESVIV…ALYKAFEASY (383 aa). In terms of domain architecture, ATP-grasp 2 spans 671-861; sequence EKALKDLGIP…MAQVATKLIL (191 aa). Positions 707, 746, 748, 752, 777, 778, 779, 780, 820, and 832 each coordinate ATP. Mg(2+) contacts are provided by glutamine 820, glutamate 832, and asparagine 834. Positions 820, 832, and 834 each coordinate Mn(2+). The MGS-like domain occupies 930 to 1058; the sequence is LHMPEYGTIV…ESRTFSIEAI (129 aa). The allosteric domain stretch occupies residues 930-1058; that stretch reads LHMPEYGTIV…ESRTFSIEAI (129 aa).

The protein belongs to the CarB family. In terms of assembly, composed of two chains; the small (or glutamine) chain promotes the hydrolysis of glutamine to ammonia, which is used by the large (or ammonia) chain to synthesize carbamoyl phosphate. Tetramer of heterodimers (alpha,beta)4. Mg(2+) is required as a cofactor. Requires Mn(2+) as cofactor.

The enzyme catalyses hydrogencarbonate + L-glutamine + 2 ATP + H2O = carbamoyl phosphate + L-glutamate + 2 ADP + phosphate + 2 H(+). It catalyses the reaction hydrogencarbonate + NH4(+) + 2 ATP = carbamoyl phosphate + 2 ADP + phosphate + 2 H(+). It participates in amino-acid biosynthesis; L-arginine biosynthesis; carbamoyl phosphate from bicarbonate: step 1/1. Its pathway is pyrimidine metabolism; UMP biosynthesis via de novo pathway; (S)-dihydroorotate from bicarbonate: step 1/3. In terms of biological role, large subunit of the glutamine-dependent carbamoyl phosphate synthetase (CPSase). CPSase catalyzes the formation of carbamoyl phosphate from the ammonia moiety of glutamine, carbonate, and phosphate donated by ATP, constituting the first step of 2 biosynthetic pathways, one leading to arginine and/or urea and the other to pyrimidine nucleotides. The large subunit (synthetase) binds the substrates ammonia (free or transferred from glutamine from the small subunit), hydrogencarbonate and ATP and carries out an ATP-coupled ligase reaction, activating hydrogencarbonate by forming carboxy phosphate which reacts with ammonia to form carbamoyl phosphate. The sequence is that of Carbamoyl phosphate synthase large chain from Streptococcus equi subsp. zooepidemicus (strain H70).